The primary structure comprises 287 residues: MAGAKEIRSKIASVQNTQKITKAMEMVAASKMRKSQDRMASSRPYADTMRKVIGHLANGNLEYKHPYLEERDVKRVGYLVVSTDRGLCGGLNINLFKKLLADMKVWSDKGVQSDIAMIGSKGVSFFNSVGGNIVAQVTGMGDNPSLSELIGPVKVMLQAYDEGRLDRLYVVSNKFINTMSQVPTLTQLLPLPASEDQELKQKAWDYLYEPDPKPLLDTLLRRYVESQVYQGVVENLASEQAARMVAMKAATDNGGSLIKELQLVYNKARQASITQELTEIVGGASAV.

It belongs to the ATPase gamma chain family. In terms of assembly, F-type ATPases have 2 components, CF(1) - the catalytic core - and CF(0) - the membrane proton channel. CF(1) has five subunits: alpha(3), beta(3), gamma(1), delta(1), epsilon(1). CF(0) has three main subunits: a, b and c.

Its subcellular location is the cell inner membrane. Functionally, produces ATP from ADP in the presence of a proton gradient across the membrane. The gamma chain is believed to be important in regulating ATPase activity and the flow of protons through the CF(0) complex. This chain is ATP synthase gamma chain, found in Enterobacter sp. (strain 638).